The following is a 596-amino-acid chain: Elongation factor 4 (596 aa).

One can recognise a tr-type G domain in the interval 2–184 (KHIRNFSIIA…VIVAQIPSPE (183 aa)). Residues 14 to 19 (DHGKST) and 131 to 134 (NKID) each bind GTP.

The protein belongs to the TRAFAC class translation factor GTPase superfamily. Classic translation factor GTPase family. LepA subfamily.

The protein localises to the cell inner membrane. It carries out the reaction GTP + H2O = GDP + phosphate + H(+). In terms of biological role, required for accurate and efficient protein synthesis under certain stress conditions. May act as a fidelity factor of the translation reaction, by catalyzing a one-codon backward translocation of tRNAs on improperly translocated ribosomes. Back-translocation proceeds from a post-translocation (POST) complex to a pre-translocation (PRE) complex, thus giving elongation factor G a second chance to translocate the tRNAs correctly. Binds to ribosomes in a GTP-dependent manner. The chain is Elongation factor 4 from Shewanella sediminis (strain HAW-EB3).